The chain runs to 244 residues: MGHSSKTTEFLGLTFNLSNVLMITIASIIVLLIAVLTTRVLSIRPTKAQNFMEWIVDFVRNIIGSSMDMKTGAPFLALGVTLLMYIFVSNMLGLPFSISVDHNLWWKSPTADPAITMTLAVMVMGLTHYYGVKAKGVKEYTKDYFRPIPLLVPLKIIEEFANTLTLGLRLYGNIFAGEILLGLLAGLATNFYSQNIALGIIGTLGAIVPMIVWQAFSLFVGTIQAFIFTMLTMVYISHKVSDEH.

7 helical membrane-spanning segments follow: residues 17–37 (LSNVLMITIASIIVLLIAVLT), 74–94 (PFLALGVTLLMYIFVSNMLGL), 112–132 (DPAITMTLAVMVMGLTHYYGV), 148–168 (IPLLVPLKIIEEFANTLTLGL), 171–191 (YGNIFAGEILLGLLAGLATNF), 196–216 (IALGIIGTLGAIVPMIVWQAF), and 217–237 (SLFVGTIQAFIFTMLTMVYIS).

This sequence belongs to the ATPase A chain family. F-type ATPases have 2 components, CF(1) - the catalytic core - and CF(0) - the membrane proton channel. CF(1) has five subunits: alpha(3), beta(3), gamma(1), delta(1), epsilon(1). CF(0) has three main subunits: a(1), b(2) and c(9-12). The alpha and beta chains form an alternating ring which encloses part of the gamma chain. CF(1) is attached to CF(0) by a central stalk formed by the gamma and epsilon chains, while a peripheral stalk is formed by the delta and b chains.

It is found in the cell membrane. Key component of the proton channel; it plays a direct role in the translocation of protons across the membrane. This is ATP synthase subunit a from Bacillus pumilus (strain SAFR-032).